The sequence spans 287 residues: Universal stress protein Slr1230 (287 aa).

It belongs to the universal stress protein A family.

This is Universal stress protein Slr1230 from Synechocystis sp. (strain ATCC 27184 / PCC 6803 / Kazusa).